The following is a 500-amino-acid chain: MGIRMGRRLLFTLFLGALFCNGVYAKFTRYSFPKDFIFGTGSAAYQYEGAYKEGGKGPSVWDNFTHIPGKILNNDNGDVANDFYHRYKEDVSLLKDMNMDAFRFSIAWTRILPNGSLSGGINKEGVAFYNSLINDVIAKGMIPFVTIFHWDTPLALESKYGGFLSEDIVKEYVDFAEVCFREFGDRVKYWTTFNEPFTYSAYGYGKGVFAPGRCSSYVSKSCGVGDSSREPYLVAHHIHLSHAAAVQLYRTKYQPTQKGQIGMVVVTHWFVPYDNSDADRGAVQRSLDFIYGWFMDPIVHGDYPGTMRGWLGNRLPEFTPEQSAMVKGSYDFIGVNYYTTYYAKSIPPPNSNELSYDLDNRANTTGFRNGKPIGPQEFTPIFFNYPPGLRELLLYTKRRYNNPTIYVTENGIDEGNNSTLPEALKDGHRIEFHSKHLQFVNHAIKNGVNVKGYFTWTFMDCFEWGDGYLDRFGLIYVDRKTLKRYRKESSYWIEDFLKRH.

Positions 1-25 (MGIRMGRRLLFTLFLGALFCNGVYA) are cleaved as a signal peptide. Q46 lines the a beta-D-glucoside pocket. N63 and N114 each carry an N-linked (GlcNAc...) asparagine glycan. A beta-D-glucoside contacts are provided by residues H149 and 194–195 (NE). E195 serves as the catalytic Proton donor. An intrachain disulfide couples C214 to C222. Y338 contacts a beta-D-glucoside. N-linked (GlcNAc...) asparagine glycosylation is present at N363. E409 provides a ligand contact to a beta-D-glucoside. E409 (nucleophile) is an active-site residue. N-linked (GlcNAc...) asparagine glycans are attached at residues N416 and N417. A beta-D-glucoside is bound by residues W456, 463-464 (EW), and F472.

It belongs to the glycosyl hydrolase 1 family.

The catalysed reaction is Hydrolysis of terminal, non-reducing beta-D-glucosyl residues with release of beta-D-glucose.. This is Beta-glucosidase 30 (BGLU30) from Oryza sativa subsp. japonica (Rice).